Consider the following 212-residue polypeptide: Uracil-DNA glycosylase (212 aa).

Asp-59 (proton acceptor) is an active-site residue.

The protein belongs to the uracil-DNA glycosylase (UDG) superfamily. UNG family.

It localises to the cytoplasm. The enzyme catalyses Hydrolyzes single-stranded DNA or mismatched double-stranded DNA and polynucleotides, releasing free uracil.. In terms of biological role, excises uracil residues from the DNA which can arise as a result of misincorporation of dUMP residues by DNA polymerase or due to deamination of cytosine. The protein is Uracil-DNA glycosylase of Ureaplasma urealyticum serovar 10 (strain ATCC 33699 / Western).